The primary structure comprises 252 residues: 2-succinyl-6-hydroxy-2,4-cyclohexadiene-1-carboxylate synthase (252 aa).

This sequence belongs to the AB hydrolase superfamily. MenH family. Monomer.

The catalysed reaction is 5-enolpyruvoyl-6-hydroxy-2-succinyl-cyclohex-3-ene-1-carboxylate = (1R,6R)-6-hydroxy-2-succinyl-cyclohexa-2,4-diene-1-carboxylate + pyruvate. It participates in quinol/quinone metabolism; 1,4-dihydroxy-2-naphthoate biosynthesis; 1,4-dihydroxy-2-naphthoate from chorismate: step 3/7. The protein operates within quinol/quinone metabolism; menaquinone biosynthesis. Its function is as follows. Catalyzes a proton abstraction reaction that results in 2,5-elimination of pyruvate from 2-succinyl-5-enolpyruvyl-6-hydroxy-3-cyclohexene-1-carboxylate (SEPHCHC) and the formation of 2-succinyl-6-hydroxy-2,4-cyclohexadiene-1-carboxylate (SHCHC). This Escherichia coli (strain UTI89 / UPEC) protein is 2-succinyl-6-hydroxy-2,4-cyclohexadiene-1-carboxylate synthase.